A 155-amino-acid chain; its full sequence is S-ribosylhomocysteine lyase (155 aa).

His-57, His-61, and Cys-124 together coordinate Fe cation.

The protein belongs to the LuxS family. Homodimer. Fe cation is required as a cofactor.

It carries out the reaction S-(5-deoxy-D-ribos-5-yl)-L-homocysteine = (S)-4,5-dihydroxypentane-2,3-dione + L-homocysteine. Its function is as follows. Involved in the synthesis of autoinducer 2 (AI-2) which is secreted by bacteria and is used to communicate both the cell density and the metabolic potential of the environment. The regulation of gene expression in response to changes in cell density is called quorum sensing. Catalyzes the transformation of S-ribosylhomocysteine (RHC) to homocysteine (HC) and 4,5-dihydroxy-2,3-pentadione (DPD). In Listeria monocytogenes serotype 4a (strain HCC23), this protein is S-ribosylhomocysteine lyase.